The chain runs to 519 residues: U3 small nucleolar RNA-associated protein 15 homolog (519 aa).

Position 2 is an N-acetylalanine (Ala-2). 7 WD repeats span residues 36 to 75 (KEFG…PIKT), 78 to 117 (RFKD…PLRQ), 120 to 159 (GHTK…EILT), 162 to 202 (EHSD…SVIS), 204 to 242 (EHGQ…QLLV), 246 to 285 (NHHK…VVHS), and 287 to 326 (DYTA…KKDS). Residue Lys-249 forms a Glycyl lysine isopeptide (Lys-Gly) (interchain with G-Cter in SUMO2) linkage.

As to quaternary structure, part of the small subunit (SSU) processome, composed of more than 70 proteins and the RNA chaperone small nucleolar RNA (snoRNA) U3. May be a component of the proposed t-UTP subcomplex of the ribosomal small subunit (SSU) processome containing at least UTP4, WDR43, HEATR1, UTP15, WDR75. Interacts directly with UTP4 and WDR43.

The protein localises to the nucleus. Its subcellular location is the nucleolus. In terms of biological role, ribosome biogenesis factor. Involved in nucleolar processing of pre-18S ribosomal RNA. Required for optimal pre-ribosomal RNA transcription by RNA polymerase I. Part of the small subunit (SSU) processome, first precursor of the small eukaryotic ribosomal subunit. During the assembly of the SSU processome in the nucleolus, many ribosome biogenesis factors, an RNA chaperone and ribosomal proteins associate with the nascent pre-rRNA and work in concert to generate RNA folding, modifications, rearrangements and cleavage as well as targeted degradation of pre-ribosomal RNA by the RNA exosome. The sequence is that of U3 small nucleolar RNA-associated protein 15 homolog from Bos taurus (Bovine).